The following is a 277-amino-acid chain: NAD kinase (277 aa).

The active-site Proton acceptor is the aspartate 55. Residues 55–56, 131–132, arginine 157, aspartate 159, and 170–175 contribute to the NAD(+) site; these read DG, NE, and TAYNKS.

The protein belongs to the NAD kinase family. A divalent metal cation is required as a cofactor.

It localises to the cytoplasm. It catalyses the reaction NAD(+) + ATP = ADP + NADP(+) + H(+). Its function is as follows. Involved in the regulation of the intracellular balance of NAD and NADP, and is a key enzyme in the biosynthesis of NADP. Catalyzes specifically the phosphorylation on 2'-hydroxyl of the adenosine moiety of NAD to yield NADP. The protein is NAD kinase of Streptococcus mutans serotype c (strain ATCC 700610 / UA159).